Reading from the N-terminus, the 252-residue chain is Phosphate import ATP-binding protein PstB (252 aa).

In terms of domain architecture, ABC transporter spans 6 to 247 (IEVKNLNTYF…PKNKQTENYI (242 aa)). Position 38-45 (38-45 (GPSGCGKS)) interacts with ATP.

It belongs to the ABC transporter superfamily. Phosphate importer (TC 3.A.1.7) family. The complex is composed of two ATP-binding proteins (PstB), two transmembrane proteins (PstC and PstA) and a solute-binding protein (PstS).

It localises to the cell membrane. It catalyses the reaction phosphate(out) + ATP + H2O = ADP + 2 phosphate(in) + H(+). Part of the ABC transporter complex PstSACB involved in phosphate import. Responsible for energy coupling to the transport system. This Methanosphaera stadtmanae (strain ATCC 43021 / DSM 3091 / JCM 11832 / MCB-3) protein is Phosphate import ATP-binding protein PstB.